The primary structure comprises 189 residues: Probable nicotinate-nucleotide adenylyltransferase (189 aa).

The protein belongs to the NadD family.

The catalysed reaction is nicotinate beta-D-ribonucleotide + ATP + H(+) = deamido-NAD(+) + diphosphate. It participates in cofactor biosynthesis; NAD(+) biosynthesis; deamido-NAD(+) from nicotinate D-ribonucleotide: step 1/1. Functionally, catalyzes the reversible adenylation of nicotinate mononucleotide (NaMN) to nicotinic acid adenine dinucleotide (NaAD). The sequence is that of Probable nicotinate-nucleotide adenylyltransferase from Bacillus cereus (strain AH820).